The chain runs to 424 residues: MAVEYVCCSPNFFIHIAVIVFLVLFAGLMSGLTLGLMSLSLVDLEVLAKSGTPEHRKYAAKILPVVKNQHLLLVTLLICNAAAMETLPIFLDGLVTAWGAILISVTLILLFGEIIPQSICSRYGLAIGATVAPFVRVLVFICLPVAWPISKLLDFLLGHRRAALFRRAELKTLVDFHGNEAGKGGELTHDETTIIAGALELSEKMVKDAMTPISDIFVIDINAKLDRDLMNLILEKGHSRVPVYYEQPTNIIGLVLVKNLLTINPDEEIPVKNVTIRRIPRVPEILPLYDILNEFQKGLSHMAVVVRQCDKIHPLPSKNGSVKEARVDVDSEGTPTPQERMLRTKRSLQKWKSFPNRASSFKGGSKSKKWSKDNDADILQLNGNPLPKLAEEEEAVGIITMEDVIEELLQEEIFDETDHHFEDS.

Topologically, residues 1–11 (MAVEYVCCSPN) are extracellular. The region spanning 8–191 (CSPNFFIHIA…GKGGELTHDE (184 aa)) is the CNNM transmembrane domain. Residues 12–32 (FFIHIAVIVFLVLFAGLMSGL) traverse the membrane as a helical segment. The Cytoplasmic portion of the chain corresponds to 33–70 (TLGLMSLSLVDLEVLAKSGTPEHRKYAAKILPVVKNQH). The helical transmembrane segment at 71–91 (LLLVTLLICNAAAMETLPIFL) threads the bilayer. Residues 92–94 (DGL) are Extracellular-facing. A helical transmembrane segment spans residues 95 to 115 (VTAWGAILISVTLILLFGEII). Topologically, residues 116-136 (PQSICSRYGLAIGATVAPFVR) are cytoplasmic. The helical transmembrane segment at 137 to 157 (VLVFICLPVAWPISKLLDFLL) threads the bilayer. Residues 158–424 (GHRRAALFRR…DETDHHFEDS (267 aa)) are Extracellular-facing. The CBS 1 domain occupies 210–271 (MTPISDIFVI…TINPDEEIPV (62 aa)). Asparagine 273 and asparagine 319 each carry an N-linked (GlcNAc...) asparagine glycan. CBS domains are found at residues 275-331 (TIRR…DVDS) and 355-416 (PNRA…IFDE). Disordered stretches follow at residues 321-340 (SVKEARVDVDSEGTPTPQER) and 355-374 (PNRASSFKGGSKSKKWSKDN). Phosphoserine is present on serine 331.

It is found in the membrane. This is DUF21 domain-containing protein At4g33700 (CBSDUF6) from Arabidopsis thaliana (Mouse-ear cress).